Here is a 265-residue protein sequence, read N- to C-terminus: Pyrroline-5-carboxylate reductase (265 aa).

It belongs to the pyrroline-5-carboxylate reductase family.

Its subcellular location is the cytoplasm. It catalyses the reaction L-proline + NADP(+) = (S)-1-pyrroline-5-carboxylate + NADPH + 2 H(+). The enzyme catalyses L-proline + NAD(+) = (S)-1-pyrroline-5-carboxylate + NADH + 2 H(+). The protein operates within amino-acid biosynthesis; L-proline biosynthesis; L-proline from L-glutamate 5-semialdehyde: step 1/1. Its function is as follows. Catalyzes the reduction of 1-pyrroline-5-carboxylate (PCA) to L-proline. This is Pyrroline-5-carboxylate reductase from Aquifex aeolicus (strain VF5).